The sequence spans 175 residues: ATP-dependent protease subunit HslV (175 aa).

The active site involves Thr2. 3 residues coordinate Na(+): Gly158, Cys161, and Thr164.

The protein belongs to the peptidase T1B family. HslV subfamily. In terms of assembly, a double ring-shaped homohexamer of HslV is capped on each side by a ring-shaped HslU homohexamer. The assembly of the HslU/HslV complex is dependent on binding of ATP.

The protein resides in the cytoplasm. It catalyses the reaction ATP-dependent cleavage of peptide bonds with broad specificity.. With respect to regulation, allosterically activated by HslU binding. Protease subunit of a proteasome-like degradation complex believed to be a general protein degrading machinery. The chain is ATP-dependent protease subunit HslV from Histophilus somni (strain 129Pt) (Haemophilus somnus).